We begin with the raw amino-acid sequence, 147 residues long: UPF0208 membrane protein PM0703 (147 aa).

2 helical membrane-spanning segments follow: residues 32–52 (VIKA…FAIT) and 65–85 (LAIA…GLYW).

The protein belongs to the UPF0208 family.

The protein localises to the cell inner membrane. In Pasteurella multocida (strain Pm70), this protein is UPF0208 membrane protein PM0703.